The chain runs to 695 residues: DNA ligase (695 aa).

30 to 34 contributes to the NAD(+) binding site; sequence DADFD. A disordered region spans residues 52 to 71; it reads TGASPTEEVAPAPPTSSPFR. NAD(+)-binding positions include 81–82 and Glu-106; that span reads SL. Residue Lys-108 is the N6-AMP-lysine intermediate of the active site. NAD(+) is bound by residues Arg-129, Glu-169, Lys-285, and Lys-309. Zn(2+) is bound by residues Cys-403, Cys-406, Cys-422, and Cys-428. The region spanning 599–688 is the BRCT domain; sequence VDSALLEGLT…APSSGDDAST (90 aa). Positions 676–695 are disordered; that stretch reads ENGAPSSGDDASTSADSVDD. Residues 679–695 show a composition bias toward low complexity; that stretch reads APSSGDDASTSADSVDD.

It belongs to the NAD-dependent DNA ligase family. LigA subfamily. The cofactor is Mg(2+). Requires Mn(2+) as cofactor.

It carries out the reaction NAD(+) + (deoxyribonucleotide)n-3'-hydroxyl + 5'-phospho-(deoxyribonucleotide)m = (deoxyribonucleotide)n+m + AMP + beta-nicotinamide D-nucleotide.. Functionally, DNA ligase that catalyzes the formation of phosphodiester linkages between 5'-phosphoryl and 3'-hydroxyl groups in double-stranded DNA using NAD as a coenzyme and as the energy source for the reaction. It is essential for DNA replication and repair of damaged DNA. This chain is DNA ligase, found in Corynebacterium jeikeium (strain K411).